Here is a 275-residue protein sequence, read N- to C-terminus: Vitamin B12-binding protein (275 aa).

An N-terminal signal peptide occupies residues 1–27 (MKWIKSTGSIGLSLLLFLSSFSHSLYA). One can recognise a Fe/B12 periplasmic-binding domain in the interval 31–275 (RVISLSPSTT…LCQQLNDNGS (245 aa)). Tyr-58 contributes to the cyanocob(III)alamin binding site. Residues Cys-191 and Cys-267 are joined by a disulfide bond.

This sequence belongs to the BtuF family. As to quaternary structure, the complex is composed of two ATP-binding proteins (BtuD), two transmembrane proteins (BtuC) and a solute-binding protein (BtuF).

It is found in the periplasm. Functionally, part of the ABC transporter complex BtuCDF involved in vitamin B12 import. Binds vitamin B12 and delivers it to the periplasmic surface of BtuC. The protein is Vitamin B12-binding protein of Photorhabdus laumondii subsp. laumondii (strain DSM 15139 / CIP 105565 / TT01) (Photorhabdus luminescens subsp. laumondii).